The sequence spans 239 residues: Ribosomal RNA small subunit methyltransferase G (239 aa).

Residues glycine 77, phenylalanine 82, 128-129 (AE), and arginine 147 contribute to the S-adenosyl-L-methionine site.

It belongs to the methyltransferase superfamily. RNA methyltransferase RsmG family.

It is found in the cytoplasm. Functionally, specifically methylates the N7 position of guanine in position 535 of 16S rRNA. The chain is Ribosomal RNA small subunit methyltransferase G from Bacillus cereus (strain ZK / E33L).